The following is a 129-amino-acid chain: ISHQYHERPIALYTNLVILGQPPEKPTRDRAGAARTSRPIPPPVGDLHLFGKKLISLYVTYIYYTLCTPNCRCCIRRKNSPYLYRLNFCLIDTCLELCPPTFSLCITKICVSQKILRCLKTGETCVWVL.

This is an uncharacterized protein from Homo sapiens (Human).